A 116-amino-acid chain; its full sequence is Somatostatin (116 aa).

The N-terminal stretch at 1–24 (MLSCRLQCALAALSIVLALGGVTC) is a signal peptide. The propeptide occupies 25 to 88 (APSDPRLRQF…QDEMRLELQR (64 aa)). Alanine 43 carries the alanine amide modification. Residues 62-99 (QTENDALEPEDLSQAAEQDEMRLELQRSANSNPAMAPR) are disordered. Cysteine 105 and cysteine 116 are oxidised to a cystine.

The protein belongs to the somatostatin family. Post-translationally, C-terminal amidation of the neuronostatin peptide is required for its biological activity, including for the regulation of mean arterial pressure.

The protein localises to the secreted. In terms of biological role, inhibits the secretion of pituitary hormones, including that of growth hormone/somatotropin (GH1), PRL, ACTH, luteinizing hormone (LH) and TSH. Also impairs ghrelin- and GnRH-stimulated secretion of GH1 and LH; the inhibition of ghrelin-stimulated secretion of GH1 can be further increased by neuronostatin. Its function is as follows. May enhance low-glucose-induced glucagon release by pancreatic alpha cells. This effect may be mediated by binding to GPR107 and PKA activation. May regulate cardiac contractile function. May compromise cardiomyocyte viability. In the central nervous system, may impair memory retention and may affect hippocampal excitability. May also have anxiolytic and anorexigenic effects. May play a role in arterial pressure regulation. May inhibit basal, but not ghrelin- or GnRH-stimulated secretion of GH1 or LH, but does not affect the release of other pituitary hormones, including PRL, ACTH, FSH or TSH. Potentiates inhibitory action of somatostatin on ghrelin-stimulated secretion of GH1, but not that on GnRH-stimulated secretion of LH. This is Somatostatin (SST) from Canis lupus familiaris (Dog).